Here is a 346-residue protein sequence, read N- to C-terminus: NADH-ubiquinone oxidoreductase chain 2 (346 aa).

11 helical membrane-spanning segments follow: residues 1–21, 25–45, 60–80, 95–115, 124–144, 149–169, 178–195, 200–219, 242–262, 274–294, and 326–346; these read MNPHATPVLVLSLALGTTITI, HWVLAWTGLEINTLAIIPLIS, FLTQAAASALVLFSSMTNAWA, CLLLTAAIAIKLGLVPFHFWF, LMTALLLSTLMKFPPLTLLLM, LNPALLTAMALASAALGGWMG, ILAFSSISHLGWIAIILV, LALLTFYLYTIMTSAVFMAL, ATLMLVLLSLAGLPPLTGFMP, EMTPAAMAIAMLSLLSLFFYL, and AILASLSILLLPLSPMIHAIV.

Belongs to the complex I subunit 2 family.

It localises to the mitochondrion inner membrane. The enzyme catalyses a ubiquinone + NADH + 5 H(+)(in) = a ubiquinol + NAD(+) + 4 H(+)(out). Functionally, core subunit of the mitochondrial membrane respiratory chain NADH dehydrogenase (Complex I) that is believed to belong to the minimal assembly required for catalysis. Complex I functions in the transfer of electrons from NADH to the respiratory chain. The immediate electron acceptor for the enzyme is believed to be ubiquinone. The chain is NADH-ubiquinone oxidoreductase chain 2 (MT-ND2) from Anas acuta (Northern pintail).